The primary structure comprises 83 residues: UPF0346 protein M28_Spy0369 (83 aa).

This sequence belongs to the UPF0346 family.

In Streptococcus pyogenes serotype M28 (strain MGAS6180), this protein is UPF0346 protein M28_Spy0369.